A 31-amino-acid polypeptide reads, in one-letter code: Cytochrome b6-f complex subunit 6 (31 aa).

The chain crosses the membrane as a helical span at residues 4-26; the sequence is ITSYFGFLLAASTITSALLIGLS.

It belongs to the PetL family. As to quaternary structure, the 4 large subunits of the cytochrome b6-f complex are cytochrome b6, subunit IV (17 kDa polypeptide, PetD), cytochrome f and the Rieske protein, while the 4 small subunits are PetG, PetL, PetM and PetN. The complex functions as a dimer.

It is found in the plastid. Its subcellular location is the chloroplast thylakoid membrane. In terms of biological role, component of the cytochrome b6-f complex, which mediates electron transfer between photosystem II (PSII) and photosystem I (PSI), cyclic electron flow around PSI, and state transitions. PetL is important for photoautotrophic growth as well as for electron transfer efficiency and stability of the cytochrome b6-f complex. The polypeptide is Cytochrome b6-f complex subunit 6 (Chloranthus spicatus (Chulantree)).